A 309-amino-acid chain; its full sequence is Protein FdhE (309 aa).

Belongs to the FdhE family.

It is found in the cytoplasm. Its function is as follows. Necessary for formate dehydrogenase activity. The sequence is that of Protein FdhE from Salmonella paratyphi A (strain ATCC 9150 / SARB42).